A 476-amino-acid chain; its full sequence is Bifunctional protein HldE (476 aa).

Residues Met-1–Thr-318 form a ribokinase region. Asn-195–Glu-198 serves as a coordination point for ATP. Asp-264 is an active-site residue. Residues Met-344–Gly-476 form a cytidylyltransferase region.

In the N-terminal section; belongs to the carbohydrate kinase PfkB family. It in the C-terminal section; belongs to the cytidylyltransferase family. As to quaternary structure, homodimer.

It catalyses the reaction D-glycero-beta-D-manno-heptose 7-phosphate + ATP = D-glycero-beta-D-manno-heptose 1,7-bisphosphate + ADP + H(+). The catalysed reaction is D-glycero-beta-D-manno-heptose 1-phosphate + ATP + H(+) = ADP-D-glycero-beta-D-manno-heptose + diphosphate. It participates in nucleotide-sugar biosynthesis; ADP-L-glycero-beta-D-manno-heptose biosynthesis; ADP-L-glycero-beta-D-manno-heptose from D-glycero-beta-D-manno-heptose 7-phosphate: step 1/4. Its pathway is nucleotide-sugar biosynthesis; ADP-L-glycero-beta-D-manno-heptose biosynthesis; ADP-L-glycero-beta-D-manno-heptose from D-glycero-beta-D-manno-heptose 7-phosphate: step 3/4. The protein operates within bacterial outer membrane biogenesis; LPS core biosynthesis. Functionally, catalyzes the phosphorylation of D-glycero-D-manno-heptose 7-phosphate at the C-1 position to selectively form D-glycero-beta-D-manno-heptose-1,7-bisphosphate. Catalyzes the ADP transfer from ATP to D-glycero-beta-D-manno-heptose 1-phosphate, yielding ADP-D-glycero-beta-D-manno-heptose. The polypeptide is Bifunctional protein HldE (Vibrio parahaemolyticus serotype O3:K6 (strain RIMD 2210633)).